The sequence spans 479 residues: RAC-gamma serine/threonine-protein kinase (479 aa).

The residue at position 2 (Ser2) is an N-acetylserine. The PH domain maps to 5-107 (TIVKEGWVQK…WTEAIQAVAD (103 aa)). A disulfide bridge connects residues Cys59 and Cys76. The 258-residue stretch at 148 to 405 (FDYLKLLGKG…AKEIMRHSFF (258 aa)) folds into the Protein kinase domain. Residues 154-162 (LGKGTFGKV) and Lys177 contribute to the ATP site. Asp271 acts as the Proton acceptor in catalysis. Residues Cys293 and Cys307 are joined by a disulfide bond. The O-linked (GlcNAc) threonine glycan is linked to Thr302. Thr305 carries the phosphothreonine; by PDPK1 modification. A glycan (O-linked (GlcNAc) threonine) is linked at Thr309. Positions 406–479 (SGVNWQDVYD…QFSYSASGRE (74 aa)) constitute an AGC-kinase C-terminal domain. At Thr447 the chain carries Phosphothreonine. Residues 458 to 479 (DCMDNERRPHFPQFSYSASGRE) form a disordered region. Ser472 is modified (phosphoserine; by PKC/PRKCZ). Ser472 carries an O-linked (GlcNAc) serine; alternate glycan.

The protein belongs to the protein kinase superfamily. AGC Ser/Thr protein kinase family. RAC subfamily. In terms of assembly, interacts (via PH domain) with TCL1A; this enhances AKT3 phosphorylation and activation. Interacts with TRAF6. Interacts with KCTD20. Interacts with BTBD10. In terms of processing, phosphorylation on Thr-305 and Ser-472 is required for full activity. Phosphorylation of the activation loop at Thr-305 by PDPK1/PDK1 is a prerequisite for full activation. Phosphorylation at Ser-472 by mTORC2 in response to growth factors plays a key role in AKT1 activation by facilitating subsequent phosphorylation of the activation loop by PDPK1/PDK1. Post-translationally, ubiquitinated. When fully phosphorylated and translocated into the nucleus, undergoes 'Lys-48'-polyubiquitination catalyzed by TTC3, leading to its degradation by the proteasome. O-GlcNAcylation at Thr-302 and Thr-309 inhibits activating phosphorylation at Thr-305 via disrupting the interaction between AKT and PDPK1/PDK1. As to expression, in adult tissues, it is highly expressed in brain, lung and kidney, but weakly in heart, testis and liver. In fetal tissues, it is highly expressed in heart, liver and brain and not at all in kidney.

The protein resides in the nucleus. It localises to the cytoplasm. It is found in the membrane. It carries out the reaction L-seryl-[protein] + ATP = O-phospho-L-seryl-[protein] + ADP + H(+). The enzyme catalyses L-threonyl-[protein] + ATP = O-phospho-L-threonyl-[protein] + ADP + H(+). Two specific sites, one in the kinase domain (Thr-305) and the other in the C-terminal regulatory region (Ser-472), need to be phosphorylated for its full activation. IGF-1 leads to the activation of AKT3, which may play a role in regulating cell survival. Functionally, AKT3 is one of 3 closely related serine/threonine-protein kinases (AKT1, AKT2 and AKT3) called the AKT kinase, and which regulate many processes including metabolism, proliferation, cell survival, growth and angiogenesis. This is mediated through serine and/or threonine phosphorylation of a range of downstream substrates. Over 100 substrate candidates have been reported so far, but for most of them, no isoform specificity has been reported. AKT3 is the least studied AKT isoform. It plays an important role in brain development and is crucial for the viability of malignant glioma cells. AKT3 isoform may also be the key molecule in up-regulation and down-regulation of MMP13 via IL13. Required for the coordination of mitochondrial biogenesis with growth factor-induced increases in cellular energy demands. Down-regulation by RNA interference reduces the expression of the phosphorylated form of BAD, resulting in the induction of caspase-dependent apoptosis. The sequence is that of RAC-gamma serine/threonine-protein kinase (AKT3) from Homo sapiens (Human).